The chain runs to 759 residues: Secretin XpsD (759 aa).

Positions 1–21 (MSERMTPRLFPVSLLIGLLAG) are cleaved as a signal peptide. C22 is lipidated: N-palmitoyl cysteine. C22 carries the S-diacylglycerol cysteine lipid modification. A compositionally biased stretch (low complexity) spans 40–51 (VGAAGATQTTAE). Residues 40–69 (VGAAGATQTTAEQRADGNASAKPTPVIRRG) are disordered. An N0 region spans residues 92-187 (GSATFNFEGE…APSTASPSAA (96 aa)). The interval 189–253 (GFEVRVVPLK…VQIFDVDWLS (65 aa)) is N1. Positions 254–323 (GMSVGVFPIQ…IQQWLDRIDS (70 aa)) are N2. The N3 stretch occupies residues 326–474 (GGVRLFSYEL…SIRDVIEKLD (149 aa)). The disordered stretch occupies residues 352 to 434 (GGRGNGGNSG…PPSTNQNGSV (83 aa)). Positions 392-401 (ATGGDIGGTS) are enriched in gly residues. Polar residues predominate over residues 425-434 (PPSTNQNGSV). A secretin region spans residues 479–734 (QVHIEAQIAE…VLITPSIVRN (256 aa)). Positions 736 to 759 (QDARDLTDEYGSKFKSMRPMDVHK) are s domain.

Belongs to the bacterial secretin family. GSP D subfamily. As to quaternary structure, forms a cylindrical channel with 15 subunits. Binds to XpsN.

It localises to the cell outer membrane. Functionally, involved in a type II secretion system (T2SS, formerly general secretion pathway, GSP) for the export of proteins. This subunit forms the outer membrane channel. In Xanthomonas campestris pv. campestris (strain ATCC 33913 / DSM 3586 / NCPPB 528 / LMG 568 / P 25), this protein is Secretin XpsD (xpsD).